Reading from the N-terminus, the 146-residue chain is Probable NADH dehydrogenase [ubiquinone] 1 alpha subcomplex subunit 12 (146 aa).

It belongs to the complex I NDUFA12 subunit family. Complex I is composed of 45 different subunits.

It is found in the mitochondrion inner membrane. In terms of biological role, accessory subunit of the mitochondrial membrane respiratory chain NADH dehydrogenase (Complex I), that is believed not to be involved in catalysis. Complex I functions in the transfer of electrons from NADH to the respiratory chain. The immediate electron acceptor for the enzyme is believed to be ubiquinone. The polypeptide is Probable NADH dehydrogenase [ubiquinone] 1 alpha subcomplex subunit 12 (Caenorhabditis elegans).